The following is a 368-amino-acid chain: Glutaminyl-peptide cyclotransferase (368 aa).

The signal sequence occupies residues 1 to 23; it reads MAGERRDSKAAAFFCLAWALCLA. A glycan (N-linked (GlcNAc...) asparagine) is linked at asparagine 53. Cysteines 143 and 169 form a disulfide. A Zn(2+)-binding site is contributed by aspartate 164. Glutamate 207 (proton acceptor) is an active-site residue. Glutamate 208 lines the Zn(2+) pocket. Aspartate 254 serves as the catalytic Proton acceptor. Asparagine 292 carries N-linked (GlcNAc...) asparagine glycosylation. Histidine 336 contributes to the Zn(2+) binding site. Asparagine 352 carries an N-linked (GlcNAc...) asparagine glycan.

The protein belongs to the glutaminyl-peptide cyclotransferase family. In terms of tissue distribution, expressed by the venom gland.

The protein localises to the secreted. The enzyme catalyses N-terminal L-glutaminyl-[peptide] = N-terminal 5-oxo-L-prolyl-[peptide] + NH4(+). Functionally, responsible for the biosynthesis of pyroglutamyl peptides. Has a bias against acidic and tryptophan residues adjacent to the N-terminal glutaminyl residue and a lack of importance of chain length after the second residue. Also catalyzes N-terminal pyroglutamate formation. The sequence is that of Glutaminyl-peptide cyclotransferase (QPCT) from Boiga irregularis (Brown tree snake).